We begin with the raw amino-acid sequence, 269 residues long: 4-hydroxy-tetrahydrodipicolinate reductase (269 aa).

Residue 11–16 (GPIGRM) participates in NAD(+) binding. K39 is an NADP(+) binding site. NAD(+) contacts are provided by residues 101 to 103 (GTT) and 125 to 128 (ASNF). H158 (proton donor/acceptor) is an active-site residue. H159 is a (S)-2,3,4,5-tetrahydrodipicolinate binding site. The active-site Proton donor is the K162. 168–169 (GT) is a (S)-2,3,4,5-tetrahydrodipicolinate binding site.

Belongs to the DapB family. As to quaternary structure, homotetramer.

Its subcellular location is the cytoplasm. It catalyses the reaction (S)-2,3,4,5-tetrahydrodipicolinate + NAD(+) + H2O = (2S,4S)-4-hydroxy-2,3,4,5-tetrahydrodipicolinate + NADH + H(+). The catalysed reaction is (S)-2,3,4,5-tetrahydrodipicolinate + NADP(+) + H2O = (2S,4S)-4-hydroxy-2,3,4,5-tetrahydrodipicolinate + NADPH + H(+). It participates in amino-acid biosynthesis; L-lysine biosynthesis via DAP pathway; (S)-tetrahydrodipicolinate from L-aspartate: step 4/4. Its function is as follows. Catalyzes the conversion of 4-hydroxy-tetrahydrodipicolinate (HTPA) to tetrahydrodipicolinate. The chain is 4-hydroxy-tetrahydrodipicolinate reductase from Buchnera aphidicola subsp. Acyrthosiphon pisum (strain APS) (Acyrthosiphon pisum symbiotic bacterium).